The chain runs to 394 residues: Phosphopentomutase (394 aa).

Positions 14, 287, 292, 328, 329, and 340 each coordinate Mn(2+).

Belongs to the phosphopentomutase family. Requires Mn(2+) as cofactor.

Its subcellular location is the cytoplasm. The enzyme catalyses 2-deoxy-alpha-D-ribose 1-phosphate = 2-deoxy-D-ribose 5-phosphate. The catalysed reaction is alpha-D-ribose 1-phosphate = D-ribose 5-phosphate. The protein operates within carbohydrate degradation; 2-deoxy-D-ribose 1-phosphate degradation; D-glyceraldehyde 3-phosphate and acetaldehyde from 2-deoxy-alpha-D-ribose 1-phosphate: step 1/2. In terms of biological role, isomerase that catalyzes the conversion of deoxy-ribose 1-phosphate (dRib-1-P) and ribose 1-phosphate (Rib-1-P) to deoxy-ribose 5-phosphate (dRib-5-P) and ribose 5-phosphate (Rib-5-P), respectively. This is Phosphopentomutase from Listeria monocytogenes serotype 4b (strain CLIP80459).